The sequence spans 225 residues: 3-dehydroquinate dehydratase (225 aa).

Residues 30–32 (EWR) and Arg-62 each bind 3-dehydroquinate. His-118 acts as the Proton donor/acceptor in catalysis. Residue Lys-143 is the Schiff-base intermediate with substrate of the active site. 3-dehydroquinate contacts are provided by Arg-186, Ser-205, and Gln-209.

The protein belongs to the type-I 3-dehydroquinase family. Homodimer.

The enzyme catalyses 3-dehydroquinate = 3-dehydroshikimate + H2O. The protein operates within metabolic intermediate biosynthesis; chorismate biosynthesis; chorismate from D-erythrose 4-phosphate and phosphoenolpyruvate: step 3/7. Its function is as follows. Involved in the third step of the chorismate pathway, which leads to the biosynthesis of aromatic amino acids. Catalyzes the cis-dehydration of 3-dehydroquinate (DHQ) and introduces the first double bond of the aromatic ring to yield 3-dehydroshikimate. The polypeptide is 3-dehydroquinate dehydratase (Streptococcus mutans serotype c (strain ATCC 700610 / UA159)).